A 263-amino-acid polypeptide reads, in one-letter code: MEIFPVFGISKISNFIANNDCRYYIDTEHQKIISDEINRQMDETVLLTNILSVEVVNDNEMYHLIPHRLSTIILCISSVGGCVISIDNDVNGKNILTFPIDHAVIISPLSKCVVVSKGPTTILVVKADIPSKRLVTSFTNDILYVNNLSLINYLPLSVFIIRRVTDYLDRHICDQIFANNKWYSIITIDNKQFPIPSNCIGMSSAKYINSSIEQDTLIHVCNLEHPFDLVYKKMQSYNSVPIKEQILYGRIDNINMSISISVY.

The protein belongs to the orthopoxvirus OPG165 family.

The polypeptide is Protein OPG165 (OPG165) (Homo sapiens (Human)).